We begin with the raw amino-acid sequence, 604 residues long: Prostaglandin G/H synthase 2 (604 aa).

Positions 1 to 17 (MLARALLLCAAVALSHA) are cleaved as a signal peptide. An EGF-like domain is found at 18 to 55 (ANPCCSNPCQNRGVCMTMGFDQYKCDCTRTGFYGENCS). 4 cysteine pairs are disulfide-bonded: C21/C32, C22/C145, C26/C42, and C44/C54. A glycan (N-linked (GlcNAc...) asparagine) is linked at N53. R106 contacts substrate. N130 carries an N-linked (GlcNAc...) asparagine glycan. The active-site Proton acceptor is H193. Position 341 (Y341) interacts with substrate. Residue Y371 is the For cyclooxygenase activity of the active site. H374 provides a ligand contact to heme b. N-linked (GlcNAc...) asparagine glycosylation occurs at N396. The residue at position 526 (C526) is an S-nitrosocysteine. Cysteines 555 and 561 form a disulfide. S565 carries the O-acetylserine modification. The N-linked (GlcNAc...) asparagine glycan is linked to N580.

The protein belongs to the prostaglandin G/H synthase family. In terms of assembly, homodimer. Heme b serves as cofactor. Post-translationally, S-nitrosylation by NOS2 (iNOS) activates enzyme activity. S-nitrosylation may take place on different Cys residues in addition to Cys-526. Acetylated at Ser-565 by SPHK1. During neuroinflammation, acetylation by SPHK1 promotes neuronal secretion of specialized preresolving mediators (SPMs), especially 15-R-lipoxin A4, which results in an increase of phagocytic microglia. In terms of tissue distribution, highest expression in kidney and urinary bladder.

Its subcellular location is the microsome membrane. It localises to the endoplasmic reticulum membrane. It is found in the nucleus inner membrane. The protein resides in the nucleus outer membrane. The enzyme catalyses (5Z,8Z,11Z,14Z)-eicosatetraenoate + AH2 + 2 O2 = prostaglandin H2 + A + H2O. It catalyses the reaction (5Z,8Z,11Z,14Z)-eicosatetraenoate + 2 O2 = prostaglandin G2. The catalysed reaction is prostaglandin G2 + AH2 = prostaglandin H2 + A + H2O. It carries out the reaction (5Z,8Z,11Z,14Z,17Z)-eicosapentaenoate + 2 O2 = prostaglandin G3. The enzyme catalyses prostaglandin G3 + AH2 = prostaglandin H3 + A + H2O. It catalyses the reaction (8Z,11Z,14Z)-eicosatrienoate + 2 O2 = prostaglandin G1. The catalysed reaction is prostaglandin G1 + AH2 = prostaglandin H1 + A + H2O. It carries out the reaction 2-(5Z,8Z,11Z,14Z)-eicosatetraenoyl-sn-glycero-3-phosphoethanolamine + 2 O2 = 2-(prostaglandin G2)-sn-glycero-3-phosphoethanolamine. The enzyme catalyses 2-(prostaglandin G2)-sn-glycero-3-phosphoethanolamine + AH2 = 2-(prostaglandin H2)-sn-glycero-3-phosphoethanolamine + A + H2O. It catalyses the reaction 2-(5Z,8Z,11Z,14Z)-eicosatetraenoyl-sn-glycero-3-phosphocholine + 2 O2 = 2-(prostaglandin G2)-sn-glycero-3-phosphocholine. The catalysed reaction is 2-(prostaglandin G2)-sn-glycero-3-phosphocholine + AH2 = 2-(prostaglandin H2)-sn-glycero-3-phosphocholine + A + H2O. It carries out the reaction (15S)-hydroperoxy-(5Z,8Z,11Z,13E)-eicosatetraenoate + AH2 = (15S)-hydroxy-(5Z,8Z,11Z,13E)-eicosatetraenoate + A + H2O. The enzyme catalyses 2-(5Z,8Z,11Z,14Z)-eicosatetraenoyl-sn-glycero-3-phosphocholine + AH2 + O2 = 2-[(15S)-hydroxy-(5Z,8Z,11Z,13E)-eicosatetraenoyl]-sn-glycero-3-phosphocholine + A + H2O. It catalyses the reaction 2-(5Z,8Z,11Z,14Z)-eicosatetraenoyl-sn-glycero-3-phosphocholine + AH2 + O2 = 2-[(15R)-hydroxy-(5Z,8Z,11Z,13E)-eicosatetraenoyl]-sn-glycero-3-phosphocholine + A + H2O. The catalysed reaction is 2-(5Z,8Z,11Z,14Z)-eicosatetraenoyl-sn-glycero-3-phosphocholine + AH2 + O2 = 2-[(11R)-hydroxy-(5Z,8Z,12E,14Z)-eicosatetraenoyl]-sn-glycero-3-phosphocholine + A + H2O. It carries out the reaction (9Z,12Z)-octadecadienoate + AH2 + O2 = 9-hydroxy-(10E,12Z)-octadecadienoate + A + H2O. The enzyme catalyses (9Z,12Z)-octadecadienoate + AH2 + O2 = 13-hydroxy-(9Z,11E)-octadecadienoate + A + H2O. It catalyses the reaction (5Z,8Z,11Z,14Z)-eicosatetraenoate + AH2 + O2 = (15R)-hydroxy-(5Z,8Z,11Z,13E)-eicosatetraenoate + A + H2O. The catalysed reaction is (5Z,8Z,11Z,14Z)-eicosatetraenoate + AH2 + O2 = (11R)-hydroxy-(5Z,8Z,12E,14Z)-eicosatetraenoate + A + H2O. It carries out the reaction (5Z,8Z,11Z,14Z,17Z)-eicosapentaenoate + AH2 + O2 = (11R)-hydroxy-(5Z,8Z,12E,14Z,17Z)-eicosapentaenoate + A + H2O. The enzyme catalyses (5Z,8Z,11Z,14Z,17Z)-eicosapentaenoate + AH2 + O2 = (18S)-hydroxy-(5Z,8Z,11Z,14Z,16E)-eicosapentaenoate + A + H2O. It catalyses the reaction (5Z,8Z,11Z,14Z,17Z)-eicosapentaenoate + AH2 + O2 = (18R)-hydroxy-(5Z,8Z,11Z,14Z,16E)-eicosapentaenoate + A + H2O. The catalysed reaction is (5Z,8Z,11Z,14Z,17Z)-eicosapentaenoate + AH2 + O2 = (15R)-hydroxy-(5Z,8Z,11Z,13E,17Z)-eicosapentaenoate + A + H2O. It carries out the reaction (5Z,8Z,11Z,14Z,17Z)-eicosapentaenoate + AH2 + O2 = (15S)-hydroxy-(5Z,8Z,11Z,13E,17Z)-eicosapentaenoate + A + H2O. The enzyme catalyses (7Z,10Z,13Z,16Z,19Z)-docosapentaenoate + AH2 + O2 = 13R-hydroxy-(7Z,10Z,14E,16Z,19Z)-docosapentaenoate + A + H2O. It catalyses the reaction (4Z,7Z,10Z,13Z,16Z,19Z)-docosahexaenoate + AH2 + O2 = 13-hydroxy-(4Z,7Z,10Z,14E,16Z,19Z)-docosahexaenoate + A + H2O. The catalysed reaction is (5S)-hydroxy-(6E,8Z,11Z,14Z)-eicosatetraenoate + AH2 + O2 = (5S,15R)-dihydroxy-(6E,8Z,11Z,13E)-eicosatetraenoate + A + H2O. It carries out the reaction (4Z,7Z,10Z,13Z,16Z,19Z)-docosahexaenoate + AH2 + O2 = 17R-hydroxy-(4Z,7Z,10Z,13Z,15E,19Z)-docosahexaenoate + A + H2O. The enzyme catalyses (5S)-hydroxy-(6E,8Z,11Z,14Z)-eicosatetraenoate + AH2 + O2 = (5S,15S)-dihydroxy-(6E,8Z,11Z,13E)-eicosatetraenoate + A + H2O. It catalyses the reaction (5S)-hydroxy-(6E,8Z,11Z,14Z)-eicosatetraenoate + AH2 + O2 = (5S,11R)-dihydroxy-(6E,8Z,12E,14Z)-eicosatetraenoate + A + H2O. The catalysed reaction is 2-(5Z,8Z,11Z,14Z-eicosatetraenoyl)-glycerol + 2 O2 = 2-glyceryl-prostaglandin G2. It carries out the reaction 2-glyceryl-prostaglandin G2 + AH2 = 2-glyceryl-prostaglandin H2 + A + H2O. The enzyme catalyses (5Z,8Z,11Z,14Z)-eicosatetraenoate + O2 = (15R)-hydroperoxy-(5Z,8Z,11Z,13E)-eicosatetraenoate. It catalyses the reaction (5Z,8Z,11Z,14Z)-eicosatetraenoate + O2 = 11R-hydroperoxy-(5Z,8Z,12E,14Z)-eicosatetraenoate. The catalysed reaction is (9Z,12Z)-octadecadienoate + AH2 + O2 = (9R)-hydroxy-(10E,12Z)-octadecadienoate + A + H2O. It carries out the reaction (9Z,12Z)-octadecadienoate + AH2 + O2 = (9S)-hydroxy-(10E,12Z)-octadecadienoate + A + H2O. The enzyme catalyses (9Z,12Z)-octadecadienoate + AH2 + O2 = (13S)-hydroxy-(9Z,11E)-octadecadienoate + A + H2O. It catalyses the reaction (9Z,12Z)-octadecadienoate + AH2 + O2 = (13R)-hydroxy-(9Z,11E)-octadecadienoate + A + H2O. It participates in lipid metabolism; prostaglandin biosynthesis. In terms of biological role, dual cyclooxygenase and peroxidase in the biosynthesis pathway of prostanoids, a class of C20 oxylipins mainly derived from arachidonate ((5Z,8Z,11Z,14Z)-eicosatetraenoate, AA, C20:4(n-6)), with a particular role in the inflammatory response. The cyclooxygenase activity oxygenates AA to the hydroperoxy endoperoxide prostaglandin G2 (PGG2), and the peroxidase activity reduces PGG2 to the hydroxy endoperoxide prostaglandin H2 (PGH2), the precursor of all 2-series prostaglandins and thromboxanes. This complex transformation is initiated by abstraction of hydrogen at carbon 13 (with S-stereochemistry), followed by insertion of molecular O2 to form the endoperoxide bridge between carbon 9 and 11 that defines prostaglandins. The insertion of a second molecule of O2 (bis-oxygenase activity) yields a hydroperoxy group in PGG2 that is then reduced to PGH2 by two electrons. Similarly catalyzes successive cyclooxygenation and peroxidation of dihomo-gamma-linoleate (DGLA, C20:3(n-6)) and eicosapentaenoate (EPA, C20:5(n-3)) to corresponding PGH1 and PGH3, the precursors of 1- and 3-series prostaglandins. In an alternative pathway of prostanoid biosynthesis, converts 2-arachidonoyl lysophopholipids to prostanoid lysophopholipids, which are then hydrolyzed by intracellular phospholipases to release free prostanoids. Metabolizes 2-arachidonoyl glycerol yielding the glyceryl ester of PGH2, a process that can contribute to pain response. Generates lipid mediators from n-3 and n-6 polyunsaturated fatty acids (PUFAs) via a lipoxygenase-type mechanism. Oxygenates PUFAs to hydroperoxy compounds and then reduces them to corresponding alcohols. Plays a role in the generation of resolution phase interaction products (resolvins) during both sterile and infectious inflammation. Metabolizes docosahexaenoate (DHA, C22:6(n-3)) to 17R-HDHA, a precursor of the D-series resolvins (RvDs). As a component of the biosynthetic pathway of E-series resolvins (RvEs), converts eicosapentaenoate (EPA, C20:5(n-3)) primarily to 18S-HEPE that is further metabolized by ALOX5 and LTA4H to generate 18S-RvE1 and 18S-RvE2. In vascular endothelial cells, converts docosapentaenoate (DPA, C22:5(n-3)) to 13R-HDPA, a precursor for 13-series resolvins (RvTs) shown to activate macrophage phagocytosis during bacterial infection. In activated leukocytes, contributes to oxygenation of hydroxyeicosatetraenoates (HETE) to diHETES (5,15-diHETE and 5,11-diHETE). Can also use linoleate (LA, (9Z,12Z)-octadecadienoate, C18:2(n-6)) as substrate and produce hydroxyoctadecadienoates (HODEs) in a regio- and stereospecific manner,being (9R)-HODE ((9R)-hydroxy-(10E,12Z)-octadecadienoate) and (13S)-HODE ((13S)-hydroxy-(9Z,11E)-octadecadienoate) its major products. During neuroinflammation, plays a role in neuronal secretion of specialized preresolving mediators (SPMs) 15R-lipoxin A4 that regulates phagocytic microglia. This is Prostaglandin G/H synthase 2 (PTGS2) from Oryctolagus cuniculus (Rabbit).